The following is a 360-amino-acid chain: SUN domain-containing protein 3 (360 aa).

Over residues 1–10 (MSGRPNSRGS) the composition is skewed to polar residues. The segment at 1 to 39 (MSGRPNSRGSSRLFRAPSEDASSGSSGSAVLPQEENPNA) is disordered. Residues 1–47 (MSGRPNSRGSSRLFRAPSEDASSGSSGSAVLPQEENPNASGLTRSWK) are Nuclear-facing. Residues 48–67 (AVMGMVFILTLLLLGFINHM) traverse the membrane as a helical segment. Over 68–360 (KLKEKAFPQK…RVHGTPKDDS (293 aa)) the chain is Perinuclear space. Residues 103–142 (KEQLELLKKESQTLENNFREILFLIEQIDVLKALLRDMQD) are a coiled coil. An SUN domain is found at 196–357 (GASVVEAGTS…YRFRVHGTPK (162 aa)).

In terms of assembly, self-associates. Interacts with SYNE1 and SPAG4/SUN4. Proposed to form a spermatogenesis-specific LINC complex with SYNE1 during sperm head formation possibly implicating a SUN domain-based heterotrimer with SPAG4/SUN4 associating with SYNE1.

Its subcellular location is the membrane. It is found in the nucleus envelope. The protein localises to the nucleus inner membrane. Its function is as follows. As a probable component of the LINC (LInker of Nucleoskeleton and Cytoskeleton) complex, involved in the connection between the nuclear lamina and the cytoskeleton. The nucleocytoplasmic interactions established by the LINC complex play an important role in the transmission of mechanical forces across the nuclear envelope and in nuclear movement and positioning. May be involved in nuclear remodeling during sperm head formation in spermatogenesis. A probable SUN3:SYNE1 LINC complex may tether spermatid nuclei to posterior cytoskeletal structures such as the manchette. This chain is SUN domain-containing protein 3 (SUN3), found in Bos taurus (Bovine).